The sequence spans 274 residues: 2,3,4,5-tetrahydropyridine-2,6-dicarboxylate N-succinyltransferase (274 aa).

Residues arginine 104 and aspartate 141 each contribute to the substrate site.

Belongs to the transferase hexapeptide repeat family. As to quaternary structure, homotrimer.

The protein resides in the cytoplasm. The enzyme catalyses (S)-2,3,4,5-tetrahydrodipicolinate + succinyl-CoA + H2O = (S)-2-succinylamino-6-oxoheptanedioate + CoA. The protein operates within amino-acid biosynthesis; L-lysine biosynthesis via DAP pathway; LL-2,6-diaminopimelate from (S)-tetrahydrodipicolinate (succinylase route): step 1/3. The polypeptide is 2,3,4,5-tetrahydropyridine-2,6-dicarboxylate N-succinyltransferase (Photorhabdus laumondii subsp. laumondii (strain DSM 15139 / CIP 105565 / TT01) (Photorhabdus luminescens subsp. laumondii)).